A 336-amino-acid chain; its full sequence is Small ribosomal subunit protein uS9m (336 aa).

Residues 32–81 (STTTTTTTTTTTTTSDEIPTTKPRFQSRFRRNQQPHQQQRSPYTSSQVTE) are disordered. Low complexity predominate over residues 33–45 (TTTTTTTTTTTTT). The span at 65 to 81 (QPHQQQRSPYTSSQVTE) shows a compositional bias: polar residues.

It belongs to the universal ribosomal protein uS9 family. In terms of assembly, component of the mitochondrial small ribosomal subunit (mt-SSU).

The protein resides in the mitochondrion. In terms of biological role, component of the mitochondrial ribosome (mitoribosome), a dedicated translation machinery responsible for the synthesis of mitochondrial genome-encoded proteins, including at least some of the essential transmembrane subunits of the mitochondrial respiratory chain. The mitoribosomes are attached to the mitochondrial inner membrane and translation products are cotranslationally integrated into the membrane. The sequence is that of Small ribosomal subunit protein uS9m (MRPS9) from Candida albicans (strain SC5314 / ATCC MYA-2876) (Yeast).